Reading from the N-terminus, the 183-residue chain is Globin-like protein 26 (183 aa).

Positions 1–25 (MGSSTSTPAPPPKKNKPEGRKADNQ) are disordered. A lipid anchor (N-myristoyl glycine) is attached at Gly2. Positions 12–18 (PKKNKPE) match the Nuclear localization signal motif. The Globin domain occupies 26 to 166 (ILNSYQKSIV…VVDQLRFGYS (141 aa)). 2 residues coordinate heme: His77 and His109.

Belongs to the globin family. Homodimer. Occurs in an equilibrium of monomeric and dimeric forms in solution. In terms of tissue distribution, detected in the head mesodermal cell. In the tail region, detected in the stomatointestinal and anal depressor muscle cells.

The protein resides in the cytoplasm. It is found in the nucleus lamina. The protein localises to the cell membrane. In terms of biological role, plays a role in electron transport. Utilizes the bis-histidyl hexacoordinated complex with iron to transfer electrons to cytochrome c and molecular oxygen. Plays a regulatory role in the periodicity of the defecation cycle under oxidative stress conditions. Not involved in imparting protection against general conditions of oxidative stress. May participate in redox reactions under anaerobic conditions. The protein is Globin-like protein 26 of Caenorhabditis elegans.